The primary structure comprises 716 residues: Segment polarity protein dishevelled homolog DVL-3 (716 aa).

Positions 1 to 82 constitute a DIX domain; it reads MGETKIIYHL…RVVSWLVSAE (82 aa). Omega-N-methylarginine is present on arginine 27. Phosphoserine occurs at positions 48 and 125. The disordered stretch occupies residues 85 to 235; sequence HPDPAPFCAD…VSRIERSSSF (151 aa). Residues 142 to 156 show a composition bias toward basic and acidic residues; sequence QRERPRRRDGPEHAT. Over residues 175 to 190 the composition is skewed to low complexity; the sequence is SSSTLMSSELETTSFF. At serine 192 the chain carries Phosphoserine. Residues 199–212 are compositionally biased toward low complexity; it reads SRFSSSTEQSSASR. Arginine 212 carries the omega-N-methylarginine modification. A compositionally biased stretch (basic residues) spans 213-226; sequence LMRRHKRRRRKQKV. Residues 249 to 321 form the PDZ domain; the sequence is TVTLNMEKYN…NDDAVRVLRE (73 aa). Arginine 271 is subject to Asymmetric dimethylarginine; by PRMT1; alternate. Residues arginine 271 and arginine 342 each carry the symmetric dimethylarginine; by PRMT7; alternate modification. The residue at position 342 (arginine 342) is an Omega-N-methylarginine; alternate. Threonine 346 is modified (phosphothreonine). Residues 422 to 496 form the DEP domain; that stretch reads PESGLEVRDR…SEQCYYIFGD (75 aa). The segment at 546–691 is disordered; it reads PYNPHPGFPE…PPGRDLASVP (146 aa). Low complexity predominate over residues 565–581; sequence ASSQHSEGSRSSGSNRS. Composition is skewed to basic and acidic residues over residues 582–595 and 604–622; these read GSDR…KAGD and ESDH…RAPS. At arginine 614 the chain carries Symmetric dimethylarginine; by PRMT7. Residues 653–682 show a composition bias toward pro residues; that stretch reads YGPPGVPPLYGPPMLMMPPPPAAMGPPGAP. Serine 697 is modified (phosphoserine). Arginine 698 bears the Omega-N-methylarginine; alternate mark. At arginine 698 the chain carries Dimethylated arginine; alternate. At serine 700 the chain carries Phosphoserine.

This sequence belongs to the DSH family. In terms of assembly, interacts (via the PDZ domain) with the C-terminal regions of VANGL1 and VANGL2. Interacts (via the region containing both the PDZ and DEP domains) with LRRFIP2; the DIX domain may inhibit this interaction. Interacts with CYLD, CEP164 and DAB2. Interacts with DCDC2. Interacts with FOXK1 and FOXK2. Interacts with DAAM2. In terms of processing, ubiquitinated. Deubiquitinated by CYLD, which acts on 'Lys-63'-linked ubiquitin chains. Phosphorylated by CSNK1D. Post-translationally, arginine methylation may function as a switch in regulation of function in Wnt signaling.

It is found in the cytoplasm. Functionally, involved in the signal transduction pathway mediated by multiple Wnt genes. The polypeptide is Segment polarity protein dishevelled homolog DVL-3 (DVL3) (Homo sapiens (Human)).